A 617-amino-acid polypeptide reads, in one-letter code: Phosphomethylpyrimidine synthase (617 aa).

Substrate contacts are provided by residues asparagine 230, methionine 259, tyrosine 288, histidine 324, 344-346 (SRG), 385-388 (DGLR), and glutamate 424. Zn(2+) is bound at residue histidine 428. Residue tyrosine 451 participates in substrate binding. Residue histidine 492 coordinates Zn(2+). [4Fe-4S] cluster-binding residues include cysteine 572, cysteine 575, and cysteine 580.

Belongs to the ThiC family. In terms of assembly, homodimer. [4Fe-4S] cluster serves as cofactor.

The catalysed reaction is 5-amino-1-(5-phospho-beta-D-ribosyl)imidazole + S-adenosyl-L-methionine = 4-amino-2-methyl-5-(phosphooxymethyl)pyrimidine + CO + 5'-deoxyadenosine + formate + L-methionine + 3 H(+). It participates in cofactor biosynthesis; thiamine diphosphate biosynthesis. In terms of biological role, catalyzes the synthesis of the hydroxymethylpyrimidine phosphate (HMP-P) moiety of thiamine from aminoimidazole ribotide (AIR) in a radical S-adenosyl-L-methionine (SAM)-dependent reaction. The chain is Phosphomethylpyrimidine synthase from Paracidovorax citrulli (strain AAC00-1) (Acidovorax citrulli).